Reading from the N-terminus, the 157-residue chain is Phosphopantetheine adenylyltransferase (157 aa).

Serine 8 lines the substrate pocket. Residues 8-9 (SF) and histidine 16 contribute to the ATP site. Residues lysine 40, threonine 72, and arginine 86 each coordinate substrate. Residues 87 to 89 (GLR), glutamate 97, and 122 to 128 (YSFLSSS) each bind ATP.

The protein belongs to the bacterial CoaD family. As to quaternary structure, homohexamer. Mg(2+) is required as a cofactor.

The protein localises to the cytoplasm. It carries out the reaction (R)-4'-phosphopantetheine + ATP + H(+) = 3'-dephospho-CoA + diphosphate. The protein operates within cofactor biosynthesis; coenzyme A biosynthesis; CoA from (R)-pantothenate: step 4/5. In terms of biological role, reversibly transfers an adenylyl group from ATP to 4'-phosphopantetheine, yielding dephospho-CoA (dPCoA) and pyrophosphate. The polypeptide is Phosphopantetheine adenylyltransferase (Gloeothece citriformis (strain PCC 7424) (Cyanothece sp. (strain PCC 7424))).